Reading from the N-terminus, the 629-residue chain is MAEPQQQLVDIDPDFEPLSRPRSCTWPLHRPEFSEQPGNSNTSSPAPSVKPEQGIVDFINSLSLLEETEDYPDEKPVLLNDFHCQDNCAHPQQQHPQQPNPQLTHPQQVPPLPAPASGSSPAAAQRKSSSSRRNAWGNMSYADLITKAIESSPEKRLTLSQIYEWMVKSVPYFKDKGDSNSSAGWKNSIRHNLSLHSRFVRVQNEGTGKSSWWMLNPEGGKSGKSPRRRATSMDNNSKFTKSRGRAAKKKMSLQGGLDGGSNSPGSQYPKWLGSPNSHSNDDFEPWGNFRTRASSDASTLSGRRSPFLPEEDEAAEVHIGYPGTKLGGPLPSLSEVAGHHGSENMMDNLLENLNLISPKNNTQGSQEAQTALSSPLMQGSPGYPSYTSPNMGPQPQVQQDYRKCLYGQGGVGGLNPISIPTLSDSKPGGYGPFVGQYNCAPGLLKELLTADADPRGELMQSGEGQPVLPSYASQGQMAQGGKMITHPHLHAHPRSLHQLPSPAMGLNGCAMLPHGHPVRLSSMKPQPHLPHHTHLGRGGGEAGMPSYTNGNGFHRHGAIAHHHHSHPERLPSDLDDMLIDQLDVECDVERVLHDTLMDGDALDFNFDPMSSQQSFTHSVKTSTHNWVSG.

Disordered stretches follow at residues 1-54, 88-134, 211-308, and 359-397; these read MAEP…PEQG, CAHP…SRRN, SWWM…SPFL, and KNNT…QPQV. Over residues 36 to 46 the composition is skewed to polar residues; sequence QPGNSNTSSPA. 2 stretches are compositionally biased toward low complexity: residues 90 to 107 and 115 to 133; these read HPQQ…THPQ and PASG…SSRR. The fork-head DNA-binding region spans 136 to 230; it reads WGNMSYADLI…KSGKSPRRRA (95 aa). Basic residues predominate over residues 240 to 251; the sequence is TKSRGRAAKKKM. Polar residues-rich tracts occupy residues 291–302, 359–377, and 385–397; these read TRASSDASTLSG, KNNT…SPLM, and SYTS…QPQV.

The protein localises to the cytoplasm. Its subcellular location is the nucleus. In terms of biological role, transcription factor that regulates metabolic homeostasis in response to oxidative stress. Binds to the consensus sequence 5'-TT[G/A]TTTTG-3' and the related Daf-16 family binding element (DBE) with consensus sequence 5'-TT[G/A]TTTAC-3'. Main regulator of redox balance and osteoblast numbers and controls bone mass. Orchestrates the endocrine function of the skeleton in regulating glucose metabolism. May act as a positive regulator of apoptosis in cardiac smooth muscle cells as a result of its transcriptional activation of pro-apoptotic genes. This is Forkhead box protein O1-B (foxo1b) from Danio rerio (Zebrafish).